We begin with the raw amino-acid sequence, 307 residues long: Dioxygenase swnH1 (307 aa).

Residues H149, D151, and H227 each coordinate Fe cation.

The protein belongs to the PhyH family. In terms of assembly, homodimer. The cofactor is Fe cation.

It functions in the pathway mycotoxin biosynthesis. In terms of biological role, dioxygenase; part of the gene cluster that mediates the biosynthesis of swainsonine (SW), a cytotoxic fungal alkaloid and a potential cancer therapy drug. Swainsonine production occurs via a multibranched pathway and is dispensable for fungal colonization of plants and infection of insect hosts. The first step of swainsonine biosynthesis is the production of the precursor pipecolic acid (PA) via conversion of L-lysine (Lys) to 1-piperideine-6-carboxylate (P6C) by the aminotransferase swnA, the latter being further reduced to PA by the reductase swnR. The PKS-NRPS hybrid synthetase swnK uptakes and condensates PA and malonyl-CoA with and without skipping of the ketoreductase (KR) domain in order to produce 3 intermediates, 1-oxoindolizidine, (1S)-1-hydroxyindolizin, and (1R)-1-hydroxyindolizine; with the transisomer (1S)-1-hydroxyindolizin being predominant. The terminal thioester reductase (TE) domain of swnK is involved in reduction of the thioester bond to release the intermediate aldehydes. The oxidoreductase swnN could contribute to the reduction of 1-oxoindolizidine to (1S)-1-hydroxyindolizin and (1R)-1-hydroxyindolizine, contributing to the major route of SW production. The dioxygenase swnH2 would be responsible for the oxidization of (1R)-1-hydroxyindolizine into (1R,2S)-1,2-dihydroxyindolizine and of (1S)-1-hydroxyindolizin to yield both (1R,2S)-1,2-dihydroxyindolizine and (1S,2S)-1,2-dihydroxyindolizine. The dioxygenase swnH1 then performs the conversion of the 1,2-dihydroxyindolizine epimers to SW. The sequence is that of Dioxygenase swnH1 from Arthroderma benhamiae (strain ATCC MYA-4681 / CBS 112371) (Trichophyton mentagrophytes).